A 373-amino-acid chain; its full sequence is Dual-specificity RNA methyltransferase RlmN (373 aa).

The Proton acceptor role is filled by glutamate 94. The 240-residue stretch at 100 to 339 folds into the Radical SAM core domain; that stretch reads EDDRATLCVS…VIVRKTRGDD (240 aa). Cysteine 107 and cysteine 344 are oxidised to a cystine. [4Fe-4S] cluster-binding residues include cysteine 114, cysteine 118, and cysteine 121. Residues 168-169, serine 200, 222-224, and asparagine 301 contribute to the S-adenosyl-L-methionine site; these read GE and SIH. Residue cysteine 344 is the S-methylcysteine intermediate of the active site.

It belongs to the radical SAM superfamily. RlmN family. The cofactor is [4Fe-4S] cluster.

It localises to the cytoplasm. The enzyme catalyses adenosine(2503) in 23S rRNA + 2 reduced [2Fe-2S]-[ferredoxin] + 2 S-adenosyl-L-methionine = 2-methyladenosine(2503) in 23S rRNA + 5'-deoxyadenosine + L-methionine + 2 oxidized [2Fe-2S]-[ferredoxin] + S-adenosyl-L-homocysteine. It catalyses the reaction adenosine(37) in tRNA + 2 reduced [2Fe-2S]-[ferredoxin] + 2 S-adenosyl-L-methionine = 2-methyladenosine(37) in tRNA + 5'-deoxyadenosine + L-methionine + 2 oxidized [2Fe-2S]-[ferredoxin] + S-adenosyl-L-homocysteine. Functionally, specifically methylates position 2 of adenine 2503 in 23S rRNA and position 2 of adenine 37 in tRNAs. m2A2503 modification seems to play a crucial role in the proofreading step occurring at the peptidyl transferase center and thus would serve to optimize ribosomal fidelity. This is Dual-specificity RNA methyltransferase RlmN from Shewanella oneidensis (strain ATCC 700550 / JCM 31522 / CIP 106686 / LMG 19005 / NCIMB 14063 / MR-1).